We begin with the raw amino-acid sequence, 504 residues long: ATP synthase subunit beta (504 aa).

181–188 serves as a coordination point for ATP; the sequence is GGAGVGKT.

Belongs to the ATPase alpha/beta chains family. F-type ATPases have 2 components, CF(1) - the catalytic core - and CF(0) - the membrane proton channel. CF(1) has five subunits: alpha(3), beta(3), gamma(1), delta(1), epsilon(1). CF(0) has three main subunits: a(1), b(2) and c(9-12). The alpha and beta chains form an alternating ring which encloses part of the gamma chain. CF(1) is attached to CF(0) by a central stalk formed by the gamma and epsilon chains, while a peripheral stalk is formed by the delta and b chains.

It localises to the cell inner membrane. The catalysed reaction is ATP + H2O + 4 H(+)(in) = ADP + phosphate + 5 H(+)(out). Produces ATP from ADP in the presence of a proton gradient across the membrane. The catalytic sites are hosted primarily by the beta subunits. This is ATP synthase subunit beta from Ehrlichia ruminantium (strain Welgevonden).